The sequence spans 220 residues: MIAQCTVDYLGRLTAHLPSARRLLLFKADGSVSVHADDRAYKPLNWMSPPCWLTEDVAGASPAWVVENKAGEQLRITVEEVEHDSCHDLGVDPGLVKDGVEAHLQTLLAEQVQLLGEGYTLVRCEYMTAIGPVDLLCRDEQGGSVAVEIKRRGEIDGVEQLTRYLALLNRNSVLAPVRGVFAAQHIKPQARTLATDRGIRCVTLDYDKMRGMDSDEYRLF.

The protein belongs to the NucS endonuclease family.

It localises to the cytoplasm. Its function is as follows. Cleaves both 3' and 5' ssDNA extremities of branched DNA structures. This is Endonuclease NucS from Mycobacterium leprae (strain TN).